The following is a 214-amino-acid chain: Probable maleylacetoacetate isomerase (214 aa).

The GST N-terminal domain occupies 4–84; the sequence is QKPVLYSYWR…YLEETHPDVP (81 aa). Glutathione-binding positions include 14 to 19, V56, 68 to 69, Q108, and 112 to 114; these read SSCSWR, ES, and NLK. The region spanning 89–212 is the GST C-terminal domain; that stretch reads DPIKRAHARA…HPDNQPDTGL (124 aa).

Belongs to the GST superfamily. Zeta family. Requires glutathione as cofactor.

Its subcellular location is the cytoplasm. The enzyme catalyses 4-maleylacetoacetate = 4-fumarylacetoacetate. The protein operates within amino-acid degradation; L-phenylalanine degradation; acetoacetate and fumarate from L-phenylalanine: step 5/6. The protein is Probable maleylacetoacetate isomerase (gst-42) of Caenorhabditis elegans.